Consider the following 322-residue polypeptide: Arginase (322 aa).

Mn(2+) is bound by residues His-113, Asp-141, His-143, and Asp-145. Substrate is bound by residues His-143–Asn-147, Ser-154–Asn-156, and Asp-200. 2 residues coordinate Mn(2+): Asp-247 and Asp-249. Residues Thr-261 and Glu-292 each coordinate substrate.

This sequence belongs to the arginase family. As to quaternary structure, homotrimer. The cofactor is Mn(2+).

The catalysed reaction is L-arginine + H2O = urea + L-ornithine. The protein operates within nitrogen metabolism; urea cycle; L-ornithine and urea from L-arginine: step 1/1. The polypeptide is Arginase (ARG) (Coccidioides posadasii (strain C735) (Valley fever fungus)).